Reading from the N-terminus, the 357-residue chain is Eugenol O-methyltransferase (357 aa).

S-adenosyl-L-methionine-binding residues include Gly203, Asp226, Asp246, Met247, and Lys260. His264 acts as the Proton acceptor in catalysis.

Belongs to the class I-like SAM-binding methyltransferase superfamily. Cation-independent O-methyltransferase family. COMT subfamily. Specifically expressed in the peltate glandular trichomes on the surface of the young basil leaves.

The catalysed reaction is (E)-isoeugenol + S-adenosyl-L-methionine = (E)-isomethyleugenol + S-adenosyl-L-homocysteine + H(+). The protein operates within aromatic compound metabolism; phenylpropanoid biosynthesis. Its function is as follows. Phenylpropene O-methyltransferase that catalyzes the methylation of the para-4-hydroxyl of eugenol to methyleugenol. Can also convert chavicol to methylchavicol but with less affinity. The chain is Eugenol O-methyltransferase (EOMT1) from Ocimum basilicum (Sweet basil).